A 374-amino-acid chain; its full sequence is Peptide chain release factor 2 (374 aa).

Gln-249 is subject to N5-methylglutamine.

This sequence belongs to the prokaryotic/mitochondrial release factor family. In terms of processing, methylated by PrmC. Methylation increases the termination efficiency of RF2.

Its subcellular location is the cytoplasm. Its function is as follows. Peptide chain release factor 2 directs the termination of translation in response to the peptide chain termination codons UGA and UAA. The sequence is that of Peptide chain release factor 2 from Ruegeria sp. (strain TM1040) (Silicibacter sp.).